The sequence spans 1146 residues: DNA polymerase II large subunit (1146 aa).

This sequence belongs to the archaeal DNA polymerase II family. Heterodimer of a large subunit and a small subunit.

It catalyses the reaction DNA(n) + a 2'-deoxyribonucleoside 5'-triphosphate = DNA(n+1) + diphosphate. The enzyme catalyses Exonucleolytic cleavage in the 3'- to 5'-direction to yield nucleoside 5'-phosphates.. Its function is as follows. Possesses two activities: a DNA synthesis (polymerase) and an exonucleolytic activity that degrades single-stranded DNA in the 3'- to 5'-direction. Has a template-primer preference which is characteristic of a replicative DNA polymerase. The chain is DNA polymerase II large subunit from Methanosarcina barkeri (strain Fusaro / DSM 804).